Here is a 274-residue protein sequence, read N- to C-terminus: Dermonecrotic toxin SdSicTox-betaIIB1bviii (274 aa).

The active site involves His5. Mg(2+) is bound by residues Glu25 and Asp27. Residue His41 is the Nucleophile of the active site. 2 disulfide bridges follow: Cys45–Cys51 and Cys47–Cys190. Asp85 lines the Mg(2+) pocket.

The protein belongs to the arthropod phospholipase D family. Class II subfamily. Requires Mg(2+) as cofactor. As to expression, expressed by the venom gland.

The protein localises to the secreted. The enzyme catalyses an N-(acyl)-sphingosylphosphocholine = an N-(acyl)-sphingosyl-1,3-cyclic phosphate + choline. It carries out the reaction an N-(acyl)-sphingosylphosphoethanolamine = an N-(acyl)-sphingosyl-1,3-cyclic phosphate + ethanolamine. The catalysed reaction is a 1-acyl-sn-glycero-3-phosphocholine = a 1-acyl-sn-glycero-2,3-cyclic phosphate + choline. It catalyses the reaction a 1-acyl-sn-glycero-3-phosphoethanolamine = a 1-acyl-sn-glycero-2,3-cyclic phosphate + ethanolamine. Functionally, dermonecrotic toxins cleave the phosphodiester linkage between the phosphate and headgroup of certain phospholipids (sphingolipid and lysolipid substrates), forming an alcohol (often choline) and a cyclic phosphate. This toxin acts on sphingomyelin (SM). It may also act on ceramide phosphoethanolamine (CPE), lysophosphatidylcholine (LPC) and lysophosphatidylethanolamine (LPE), but not on lysophosphatidylserine (LPS), and lysophosphatidylglycerol (LPG). It acts by transphosphatidylation, releasing exclusively cyclic phosphate products as second products. Induces dermonecrosis, hemolysis, increased vascular permeability, edema, inflammatory response, and platelet aggregation. The protein is Dermonecrotic toxin SdSicTox-betaIIB1bviii of Sicarius cf. damarensis (strain GJB-2008) (Six-eyed sand spider).